A 124-amino-acid chain; its full sequence is Small ribosomal subunit protein uS12 (124 aa).

Asp89 is subject to 3-methylthioaspartic acid.

It belongs to the universal ribosomal protein uS12 family. Part of the 30S ribosomal subunit. Contacts proteins S8 and S17. May interact with IF1 in the 30S initiation complex.

Its function is as follows. With S4 and S5 plays an important role in translational accuracy. In terms of biological role, interacts with and stabilizes bases of the 16S rRNA that are involved in tRNA selection in the A site and with the mRNA backbone. Located at the interface of the 30S and 50S subunits, it traverses the body of the 30S subunit contacting proteins on the other side and probably holding the rRNA structure together. The combined cluster of proteins S8, S12 and S17 appears to hold together the shoulder and platform of the 30S subunit. In Shewanella sediminis (strain HAW-EB3), this protein is Small ribosomal subunit protein uS12.